The sequence spans 231 residues: Ferredoxin-type protein NapG (231 aa).

Positions 1–41 (MSRSAKPQNGRRRFLRDVVRTAGGLAAVGVALGLQQQTARA) form a signal peptide, tat-type signal. 4 consecutive 4Fe-4S ferredoxin-type domains span residues 50–81 (GAINENAFASACVRCGQCVQACPYDTLKLATL), 89–121 (TPYFVARDIPCEMCEDIPCAKVCPSGALDREIE), 130–166 (LAVLVDQENCLNFQGLRCDVCYRECPKIDEAITLELE), and 177–208 (FLPTVHSDACTGCGKCEKVCVLEQPAIKVLPL). 16 residues coordinate [4Fe-4S] cluster: Cys61, Cys64, Cys67, Cys71, Cys99, Cys102, Cys107, Cys111, Cys139, Cys147, Cys150, Cys154, Cys186, Cys189, Cys192, and Cys196.

Requires [4Fe-4S] cluster as cofactor. Exported by the Tat system. The position of the signal peptide cleavage has not been experimentally proven.

It localises to the periplasm. Required for electron transfer from ubiquinol, via NapC, to the periplasmic nitrate reductase NapAB complex. The sequence is that of Ferredoxin-type protein NapG (napG) from Escherichia coli (strain K12).